A 211-amino-acid chain; its full sequence is Outer-membrane lipoprotein carrier protein (211 aa).

The signal sequence occupies residues 1–25 (MRAIRMLLVSALTLGSLSATLSAHA).

It belongs to the LolA family. As to quaternary structure, monomer.

The protein resides in the periplasm. Participates in the translocation of lipoproteins from the inner membrane to the outer membrane. Only forms a complex with a lipoprotein if the residue after the N-terminal Cys is not an aspartate (The Asp acts as a targeting signal to indicate that the lipoprotein should stay in the inner membrane). The sequence is that of Outer-membrane lipoprotein carrier protein from Pseudomonas putida (strain W619).